The chain runs to 121 residues: NADH-ubiquinone oxidoreductase chain 3 (121 aa).

Helical transmembrane passes span 11-31 (ILIF…LSYF), 63-83 (FYLV…LFPW), and 90-110 (ISII…IGFI).

This sequence belongs to the complex I subunit 3 family.

It localises to the mitochondrion membrane. The catalysed reaction is a ubiquinone + NADH + 5 H(+)(in) = a ubiquinol + NAD(+) + 4 H(+)(out). Core subunit of the mitochondrial membrane respiratory chain NADH dehydrogenase (Complex I) that is believed to belong to the minimal assembly required for catalysis. Complex I functions in the transfer of electrons from NADH to the respiratory chain. The immediate electron acceptor for the enzyme is believed to be ubiquinone. This Chondrus crispus (Carrageen Irish moss) protein is NADH-ubiquinone oxidoreductase chain 3 (ND3).